Reading from the N-terminus, the 102-residue chain is Large ribosomal subunit protein bL21 (102 aa).

Belongs to the bacterial ribosomal protein bL21 family. In terms of assembly, part of the 50S ribosomal subunit. Contacts protein L20.

In terms of biological role, this protein binds to 23S rRNA in the presence of protein L20. The sequence is that of Large ribosomal subunit protein bL21 from Pediococcus pentosaceus (strain ATCC 25745 / CCUG 21536 / LMG 10740 / 183-1w).